The sequence spans 550 residues: Arginine--tRNA ligase (550 aa).

A 'HIGH' region motif is present at residues 130–140 (ANPTGPIHLGG).

This sequence belongs to the class-I aminoacyl-tRNA synthetase family. Monomer.

It is found in the cytoplasm. It carries out the reaction tRNA(Arg) + L-arginine + ATP = L-arginyl-tRNA(Arg) + AMP + diphosphate. The protein is Arginine--tRNA ligase of Corynebacterium efficiens (strain DSM 44549 / YS-314 / AJ 12310 / JCM 11189 / NBRC 100395).